The following is a 164-amino-acid chain: I-Kappa-B like protein F1 (164 aa).

3 ANK repeats span residues 57–89 (HGRQ…NINA), 94–124 (TGNT…DLGA), and 128–157 (QQET…AYNN).

This sequence belongs to the polydnaviridae I-Kappa-B-like protein family.

Its function is as follows. Suppresses the host immune response through NF-kappa-B inactivation. Possesses ankyrin repeat domains required for NF-kappa-B binding but lacks the regulatory regions required for dissociation from NF-kappa-B and degradation. Therefore, prevents host NF-kappa-B release and subsequent activation. The protein is I-Kappa-B like protein F1 (F2) of Microplitis demolitor bracovirus (isolate Webb) (MdBV).